Consider the following 514-residue polypeptide: Probable transposase for insertion sequence element IS1353 (514 aa).

A coiled-coil region spans residues 172-216 (KGDTSLEQRHEALLRELAELESQNQRLRMENAILEKASELIKKDM). The region spanning 346 to 510 (HASAPNTKWL…SPIEYRHAVG (165 aa)) is the Integrase catalytic domain. The Mg(2+) site is built by D357 and D417.

It belongs to the transposase 8 family.

Functionally, probably involved in the transposition of insertion sequence IS1353. The chain is Probable transposase for insertion sequence element IS1353 from Shigella flexneri.